An 89-amino-acid polypeptide reads, in one-letter code: Putative defensin-like protein 40 (89 aa).

Positions Met1–Ala26 are cleaved as a signal peptide. Intrachain disulfides connect Cys33-Cys88, Cys46-Cys69, Cys55-Cys81, and Cys59-Cys83.

It belongs to the DEFL family.

The protein localises to the secreted. The chain is Putative defensin-like protein 40 from Arabidopsis thaliana (Mouse-ear cress).